The primary structure comprises 119 residues: Ribosome-binding factor A (119 aa).

It belongs to the RbfA family. As to quaternary structure, monomer. Binds 30S ribosomal subunits, but not 50S ribosomal subunits or 70S ribosomes.

The protein localises to the cytoplasm. Functionally, one of several proteins that assist in the late maturation steps of the functional core of the 30S ribosomal subunit. Associates with free 30S ribosomal subunits (but not with 30S subunits that are part of 70S ribosomes or polysomes). Required for efficient processing of 16S rRNA. May interact with the 5'-terminal helix region of 16S rRNA. This Buchnera aphidicola subsp. Baizongia pistaciae (strain Bp) protein is Ribosome-binding factor A.